Consider the following 272-residue polypeptide: Ribosomal RNA small subunit methyltransferase A (272 aa).

Residues N27, L29, G54, E75, D97, and N117 each contribute to the S-adenosyl-L-methionine site.

Belongs to the class I-like SAM-binding methyltransferase superfamily. rRNA adenine N(6)-methyltransferase family. RsmA subfamily.

Its subcellular location is the cytoplasm. The catalysed reaction is adenosine(1518)/adenosine(1519) in 16S rRNA + 4 S-adenosyl-L-methionine = N(6)-dimethyladenosine(1518)/N(6)-dimethyladenosine(1519) in 16S rRNA + 4 S-adenosyl-L-homocysteine + 4 H(+). In terms of biological role, specifically dimethylates two adjacent adenosines (A1518 and A1519) in the loop of a conserved hairpin near the 3'-end of 16S rRNA in the 30S particle. May play a critical role in biogenesis of 30S subunits. In Malacoplasma penetrans (strain HF-2) (Mycoplasma penetrans), this protein is Ribosomal RNA small subunit methyltransferase A.